The primary structure comprises 420 residues: Aminoacyltransferase FemA (420 aa).

It belongs to the FemABX family. Homodimer. Interacts with FemB.

It localises to the cytoplasm. The enzyme catalyses beta-D-GlcNAc-(1-&gt;4)-Mur2Ac(oyl-L-Ala-D-isoglutaminyl-L-Lys-(N(6)-Gly)-D-Ala-D-Ala)-di-trans,octa-cis-undecaprenyl diphosphate + 2 glycyl-tRNA(Gly) = MurNAc-L-Ala-D-isoglutaminyl-L-Lys-(N(6)-tri-Gly)-D-Ala-D-Ala-diphospho-di-trans,octa-cis-undecaprenyl-GlcNAc + 2 tRNA(Gly) + 2 H(+). Its function is as follows. Catalyzes the formation of the pentaglycine interpeptide bridge, which is characteristic of the S.aureus peptidoglycan. Adds glycines 2 and 3 of the pentaglycine bridge, using glycyl-tRNA(Gly) as donor. The polypeptide is Aminoacyltransferase FemA (femA) (Staphylococcus aureus (strain bovine RF122 / ET3-1)).